The primary structure comprises 451 residues: Bifunctional protein GlmU (451 aa).

A pyrophosphorylase region spans residues 1-232; that stretch reads MTARSSLTIV…EDEVRGINTK (232 aa). Residues 11 to 14, lysine 25, glutamine 78, and 83 to 84 contribute to the UDP-N-acetyl-alpha-D-glucosamine site; these read LAAG and GT. Residue aspartate 108 participates in Mg(2+) binding. Residues glycine 144, glutamate 158, asparagine 173, and asparagine 230 each contribute to the UDP-N-acetyl-alpha-D-glucosamine site. Residue asparagine 230 coordinates Mg(2+). A linker region spans residues 233 to 253; the sequence is AQLAEAESVMQARLRKAAMEA. The tract at residues 254–451 is N-acetyltransferase; it reads GVTLIAPETV…MKTRGKKPEK (198 aa). The UDP-N-acetyl-alpha-D-glucosamine site is built by arginine 319 and lysine 337. Histidine 349 (proton acceptor) is an active-site residue. 2 residues coordinate UDP-N-acetyl-alpha-D-glucosamine: tyrosine 352 and asparagine 363. Acetyl-CoA is bound by residues alanine 366, 372–373, serine 409, and arginine 426; that span reads NY.

It in the N-terminal section; belongs to the N-acetylglucosamine-1-phosphate uridyltransferase family. In the C-terminal section; belongs to the transferase hexapeptide repeat family. Homotrimer. Mg(2+) is required as a cofactor.

The protein resides in the cytoplasm. It catalyses the reaction alpha-D-glucosamine 1-phosphate + acetyl-CoA = N-acetyl-alpha-D-glucosamine 1-phosphate + CoA + H(+). It carries out the reaction N-acetyl-alpha-D-glucosamine 1-phosphate + UTP + H(+) = UDP-N-acetyl-alpha-D-glucosamine + diphosphate. It participates in nucleotide-sugar biosynthesis; UDP-N-acetyl-alpha-D-glucosamine biosynthesis; N-acetyl-alpha-D-glucosamine 1-phosphate from alpha-D-glucosamine 6-phosphate (route II): step 2/2. The protein operates within nucleotide-sugar biosynthesis; UDP-N-acetyl-alpha-D-glucosamine biosynthesis; UDP-N-acetyl-alpha-D-glucosamine from N-acetyl-alpha-D-glucosamine 1-phosphate: step 1/1. It functions in the pathway bacterial outer membrane biogenesis; LPS lipid A biosynthesis. Catalyzes the last two sequential reactions in the de novo biosynthetic pathway for UDP-N-acetylglucosamine (UDP-GlcNAc). The C-terminal domain catalyzes the transfer of acetyl group from acetyl coenzyme A to glucosamine-1-phosphate (GlcN-1-P) to produce N-acetylglucosamine-1-phosphate (GlcNAc-1-P), which is converted into UDP-GlcNAc by the transfer of uridine 5-monophosphate (from uridine 5-triphosphate), a reaction catalyzed by the N-terminal domain. This is Bifunctional protein GlmU from Bradyrhizobium diazoefficiens (strain JCM 10833 / BCRC 13528 / IAM 13628 / NBRC 14792 / USDA 110).